We begin with the raw amino-acid sequence, 144 residues long: Phosphomevalonate dehydratase small subunit (144 aa).

The active-site Proton acceptor is the serine 65.

Belongs to the AcnX type II small subunit family. As to quaternary structure, heterodimer composed of a large subunit (PMDh-L) and a small subunit (PMDh-S).

It carries out the reaction (R)-5-phosphomevalonate = (2E)-3-methyl-5-phosphooxypent-2-enoate + H2O. It participates in isoprenoid biosynthesis; isopentenyl diphosphate biosynthesis via mevalonate pathway. In terms of biological role, component of a hydro-lyase that catalyzes the dehydration of mevalonate 5-phosphate (MVA5P) to form trans-anhydromevalonate 5-phosphate (tAHMP). Involved in the archaeal mevalonate (MVA) pathway, which provides fundamental precursors for isoprenoid biosynthesis, such as isopentenyl diphosphate (IPP) and dimethylallyl diphosphate (DMAPP). In Methanosarcina mazei (strain ATCC BAA-159 / DSM 3647 / Goe1 / Go1 / JCM 11833 / OCM 88) (Methanosarcina frisia), this protein is Phosphomevalonate dehydratase small subunit.